Consider the following 199-residue polypeptide: Recombination protein RecR (199 aa).

A C4-type zinc finger spans residues 58–73 (CLNCGNIGTSDICDIC). One can recognise a Toprim domain in the interval 81–176 (GEICVVEDVA…AVTSLAQGVP (96 aa)).

The protein belongs to the RecR family.

Functionally, may play a role in DNA repair. It seems to be involved in an RecBC-independent recombinational process of DNA repair. It may act with RecF and RecO. In Dinoroseobacter shibae (strain DSM 16493 / NCIMB 14021 / DFL 12), this protein is Recombination protein RecR.